Reading from the N-terminus, the 212-residue chain is uncharacterized protein (212 aa).

The region spanning 46–198 (LERVYREKRK…IYSLMTRLGI (153 aa)) is the SIS domain.

The protein belongs to the SIS family. PHI subfamily.

This is an uncharacterized protein from Aeropyrum pernix (strain ATCC 700893 / DSM 11879 / JCM 9820 / NBRC 100138 / K1).